Here is a 476-residue protein sequence, read N- to C-terminus: Membrane-bound lytic murein transglycosylase F (476 aa).

An N-terminal signal peptide occupies residues 1–16 (MIKTLFIILLCGILSA). Residues 17–259 (CQPVDIQDVD…HLNEKYFGHV (243 aa)) are non-LT domain. The tract at residues 260-476 (KRFDYVDTRA…VPAKSHVSAQ (217 aa)) is LT domain. E304 is a catalytic residue.

The protein in the N-terminal section; belongs to the bacterial solute-binding protein 3 family. It in the C-terminal section; belongs to the transglycosylase Slt family.

It localises to the cell outer membrane. The enzyme catalyses Exolytic cleavage of the (1-&gt;4)-beta-glycosidic linkage between N-acetylmuramic acid (MurNAc) and N-acetylglucosamine (GlcNAc) residues in peptidoglycan, from either the reducing or the non-reducing ends of the peptidoglycan chains, with concomitant formation of a 1,6-anhydrobond in the MurNAc residue.. In terms of biological role, murein-degrading enzyme that degrades murein glycan strands and insoluble, high-molecular weight murein sacculi, with the concomitant formation of a 1,6-anhydromuramoyl product. Lytic transglycosylases (LTs) play an integral role in the metabolism of the peptidoglycan (PG) sacculus. Their lytic action creates space within the PG sacculus to allow for its expansion as well as for the insertion of various structures such as secretion systems and flagella. The chain is Membrane-bound lytic murein transglycosylase F from Shewanella frigidimarina (strain NCIMB 400).